A 200-amino-acid polypeptide reads, in one-letter code: Late embryogenesis abundant protein 19 (200 aa).

Disordered stretches follow at residues 1 to 145 and 172 to 200; these read MASH…KTGS and TEDE…ARDH. Composition is skewed to basic and acidic residues over residues 13–23, 30–42, 53–81, 88–97, and 105–114; these read GETKAHTEEKA, SKDK…DRAS, QDTK…KDKT, ARDKAAESKD, and EKTEQAKQKA. Positions 52–81 form a coiled coil; that stretch reads GQDTKEATKEKAQAAKERASETAQAAKDKT. Composition is skewed to low complexity over residues 115 to 130 and 186 to 200; these read AETA…ETAQ and TSAT…ARDH.

It belongs to the LEA type 4 family.

Involved in response to stress. In Oryza sativa subsp. japonica (Rice), this protein is Late embryogenesis abundant protein 19.